The following is a 92-amino-acid chain: Small ribosomal subunit protein uS19 (92 aa).

This sequence belongs to the universal ribosomal protein uS19 family.

Its function is as follows. Protein S19 forms a complex with S13 that binds strongly to the 16S ribosomal RNA. The protein is Small ribosomal subunit protein uS19 of Yersinia pestis (strain Pestoides F).